Consider the following 387-residue polypeptide: Chorismate synthase (387 aa).

The NADP(+) site is built by arginine 42 and arginine 48. Residues 131-133 (RSS), 251-252 (QA), glycine 295, 310-314 (KPIPT), and arginine 336 each bind FMN.

Belongs to the chorismate synthase family. In terms of assembly, homotetramer. FMNH2 serves as cofactor.

The enzyme catalyses 5-O-(1-carboxyvinyl)-3-phosphoshikimate = chorismate + phosphate. Its pathway is metabolic intermediate biosynthesis; chorismate biosynthesis; chorismate from D-erythrose 4-phosphate and phosphoenolpyruvate: step 7/7. In terms of biological role, catalyzes the anti-1,4-elimination of the C-3 phosphate and the C-6 proR hydrogen from 5-enolpyruvylshikimate-3-phosphate (EPSP) to yield chorismate, which is the branch point compound that serves as the starting substrate for the three terminal pathways of aromatic amino acid biosynthesis. This reaction introduces a second double bond into the aromatic ring system. In Syntrophotalea carbinolica (strain DSM 2380 / NBRC 103641 / GraBd1) (Pelobacter carbinolicus), this protein is Chorismate synthase.